We begin with the raw amino-acid sequence, 369 residues long: MSQSLFIGLMSGTSMDGVDAVLVDFDTPSPKLIATHTEAIPEHLFKGLQRLCQPGQDEVNRLGRLDRSVGSLFAKAVNNLLASSGIDKSQVVAIGSHGQTVRHMPNLEVGFTVQIGDPNTIAAETGIDVIADFRRKDIALGGQGAPLVPAFHQQIFAKADKRRVILNIGGIANITWLPGNAEAVLGFDTGPGNTLIDGWIQQVKQQAFDRDGAFAASGKTDNTLLAQLLSHPYFMQPYPKSTGRELFNNAWLEQQLEKFGHLDEADIQSTLLDLTCHSIAADILKLSNSGELFVCGGGALNIELMNRLQALLPGFTLTTTSVLGVDPKWVEAIAFAWLALRHHQGLPANLPAVTGARREAILGARFPAA.

ATP is bound at residue 12–19 (GTSMDGVD).

Belongs to the anhydro-N-acetylmuramic acid kinase family.

It catalyses the reaction 1,6-anhydro-N-acetyl-beta-muramate + ATP + H2O = N-acetyl-D-muramate 6-phosphate + ADP + H(+). It participates in amino-sugar metabolism; 1,6-anhydro-N-acetylmuramate degradation. It functions in the pathway cell wall biogenesis; peptidoglycan recycling. Functionally, catalyzes the specific phosphorylation of 1,6-anhydro-N-acetylmuramic acid (anhMurNAc) with the simultaneous cleavage of the 1,6-anhydro ring, generating MurNAc-6-P. Is required for the utilization of anhMurNAc either imported from the medium or derived from its own cell wall murein, and thus plays a role in cell wall recycling. The sequence is that of Anhydro-N-acetylmuramic acid kinase from Shewanella amazonensis (strain ATCC BAA-1098 / SB2B).